Consider the following 149-residue polypeptide: Large ribosomal subunit protein eL19 (149 aa).

The tract at residues 45–130 (VDEGAIQAKD…RDLYDKAGGG (86 aa)) is disordered. The span at 58–85 (NSRGRARERQKKRAYGHQKGAGSRKGKA) shows a compositional bias: basic residues. Positions 90–113 (NSKEDWESRIRAQRTKLRELRDEG) are enriched in basic and acidic residues.

This sequence belongs to the eukaryotic ribosomal protein eL19 family. As to quaternary structure, part of the 50S ribosomal subunit.

Functionally, binds to the 23S rRNA. Located at the polypeptide exit tunnel on the outside of the subunit. The chain is Large ribosomal subunit protein eL19 from Haloarcula marismortui (strain ATCC 43049 / DSM 3752 / JCM 8966 / VKM B-1809) (Halobacterium marismortui).